The primary structure comprises 440 residues: Xaa-Pro dipeptidase (440 aa).

Residues D244, D255, H335, E380, and E419 each contribute to the Mn(2+) site.

The protein belongs to the peptidase M24B family. Bacterial-type prolidase subfamily. Requires Mn(2+) as cofactor.

It catalyses the reaction Xaa-L-Pro dipeptide + H2O = an L-alpha-amino acid + L-proline. Functionally, splits dipeptides with a prolyl residue in the C-terminal position. The polypeptide is Xaa-Pro dipeptidase (Shewanella baltica (strain OS195)).